Consider the following 645-residue polypeptide: Acetyl-coenzyme A synthetase (645 aa).

CoA-binding positions include Arg190–Arg193, Thr309, and Asn333. Residues Gly385 to Pro387, Asp409 to Thr414, Asp498, and Arg513 each bind ATP. Residue Ser521 participates in CoA binding. Arg524 serves as a coordination point for ATP. Residues Val535, His537, and Val540 each coordinate Mg(2+). Arg582 is a binding site for CoA. At Lys607 the chain carries N6-acetyllysine.

Belongs to the ATP-dependent AMP-binding enzyme family. Mg(2+) serves as cofactor. Post-translationally, acetylated. Deacetylation by the SIR2-homolog deacetylase activates the enzyme.

The enzyme catalyses acetate + ATP + CoA = acetyl-CoA + AMP + diphosphate. Catalyzes the conversion of acetate into acetyl-CoA (AcCoA), an essential intermediate at the junction of anabolic and catabolic pathways. AcsA undergoes a two-step reaction. In the first half reaction, AcsA combines acetate with ATP to form acetyl-adenylate (AcAMP) intermediate. In the second half reaction, it can then transfer the acetyl group from AcAMP to the sulfhydryl group of CoA, forming the product AcCoA. The sequence is that of Acetyl-coenzyme A synthetase from Beijerinckia indica subsp. indica (strain ATCC 9039 / DSM 1715 / NCIMB 8712).